Consider the following 1107-residue polypeptide: Ubiquitin-associated protein 2-like (1107 aa).

The residue at position 1 (M1) is an N-acetylmethionine. Residues 1–33 form a disordered region; the sequence is MMTSVGTNRARGNWEQPQNQNQTQHKQRPQATA. A UBA domain is found at 49–89; it reads DFEEKVKQLIDITGKNQDECVIALHDCNGDVNRAINVLLEG. The tract at residues 92-229 is disordered; the sequence is DTHSWEMVGK…NTWNNTGHFE (138 aa). The segment covering 118–132 has biased composition (basic and acidic residues); the sequence is EEGKENRDRDRDYSR. Basic residues predominate over residues 133–145; the sequence is RRGGPPRRGRGAS. Asymmetric dimethylarginine is present on residues R187 and R190. Over residues 213–226 the composition is skewed to low complexity; the sequence is NYGNSSGNTWNNTG. 3 positions are modified to phosphoserine: S376, S380, and S436. The residue at position 445 (T445) is a Phosphothreonine. Disordered stretches follow at residues 461 to 513, 550 to 676, and 689 to 814; these read AVAT…KKTS, SDYE…IPSL, and ANQH…LPPG. Phosphoserine occurs at positions 474, 487, 490, 491, and 497. Composition is skewed to low complexity over residues 494 to 505 and 554 to 589; these read QSSSPQPAQQKL and STPT…SQES. Over residues 590-656 the composition is skewed to polar residues; that stretch reads GYQSGPIQST…TQLQTTQSVE (67 aa). Residues S624, S625, S628, and S629 each carry the phosphoserine modification. A compositionally biased stretch (low complexity) spans 665–675; it reads SESPSTSSIPS. The span at 689–713 shows a compositional bias: polar residues; that stretch reads ANQHSSSLSGLSHTEEIPNTTTTQH. The span at 714–804 shows a compositional bias: low complexity; the sequence is SSALSTQQNT…STRSSVATTS (91 aa). Phosphoserine is present on residues S872 and S879. Disordered stretches follow at residues 885 to 921 and 1060 to 1107; these read FGRG…LNPA and QQPH…WGAN. 2 stretches are compositionally biased toward low complexity: residues 893–916 and 1073–1087; these read PAPA…TQQT and QDGQ…QTSS. The span at 1088–1107 shows a compositional bias: polar residues; that stretch reads IPQKPQTNKSAYNSYSWGAN.

In terms of assembly, interacts with BMI1. Part of a complex consisting of UBAP2L, BMI1 and RNF2. Interacts with G3BP1 (via NTF2 domain); promoting stress granule formation.

The protein resides in the nucleus. The protein localises to the chromosome. It localises to the cytoplasm. It is found in the stress granule. Its function is as follows. Recruits the ubiquitination machinery to RNA polymerase II for polyubiquitination, removal and degradation, when the transcription-coupled nucleotide excision repair (TC-NER) machinery fails to resolve DNA damage. Plays an important role in the activity of long-term repopulating hematopoietic stem cells (LT-HSCs). Is a regulator of stress granule assembly, required for their efficient formation. Required for proper brain development and neocortex lamination. The sequence is that of Ubiquitin-associated protein 2-like from Mus musculus (Mouse).